The chain runs to 711 residues: Ribosomal RNA large subunit methyltransferase K/L (711 aa).

One can recognise a THUMP domain in the interval 43 to 154; it reads TLYRTLLWSR…RENLVISLDL (112 aa).

This sequence belongs to the methyltransferase superfamily. RlmKL family.

The protein localises to the cytoplasm. It carries out the reaction guanosine(2445) in 23S rRNA + S-adenosyl-L-methionine = N(2)-methylguanosine(2445) in 23S rRNA + S-adenosyl-L-homocysteine + H(+). The enzyme catalyses guanosine(2069) in 23S rRNA + S-adenosyl-L-methionine = N(2)-methylguanosine(2069) in 23S rRNA + S-adenosyl-L-homocysteine + H(+). Functionally, specifically methylates the guanine in position 2445 (m2G2445) and the guanine in position 2069 (m7G2069) of 23S rRNA. In Haemophilus influenzae (strain 86-028NP), this protein is Ribosomal RNA large subunit methyltransferase K/L.